The primary structure comprises 93 residues: Large ribosomal subunit protein uL23cz/uL23cy (93 aa).

Belongs to the universal ribosomal protein uL23 family. As to quaternary structure, part of the 50S ribosomal subunit.

It is found in the plastid. The protein localises to the chloroplast. Binds to 23S rRNA. The sequence is that of Large ribosomal subunit protein uL23cz/uL23cy (rpl23-A) from Coffea arabica (Arabian coffee).